A 359-amino-acid polypeptide reads, in one-letter code: Lactosylceramide 4-alpha-galactosyltransferase (359 aa).

Residues 1 to 30 (MGISCSHLEETMSKPPDCLLRMLRGTPRQR) are Cytoplasmic-facing. Residues 31–51 (VFTFFIISFKFMFLISILIYW) traverse the membrane as a helical; Signal-anchor for type II membrane protein segment. The Lumenal segment spans residues 52–359 (HTVGAPKDQR…TTHRAMKMYL (308 aa)). The DXD motif motif lies at 198-200 (DTD). 2 N-linked (GlcNAc...) asparagine glycosylation sites follow: Asn209 and Asn315.

This sequence belongs to the glycosyltransferase 32 family.

The protein resides in the golgi apparatus membrane. It catalyses the reaction a beta-D-Gal-(1-&gt;4)-beta-D-Glc-(1&lt;-&gt;1)-Cer(d18:1(4E)) + UDP-alpha-D-galactose = a globoside Gb3Cer (d18:1(4E)) + UDP + H(+). The enzyme catalyses a beta-D-Gal-(1&lt;-&gt;1')-ceramide + UDP-alpha-D-galactose = alpha-D-Gal-(1-&gt;4)-beta-D-Gal-(1&lt;-&gt;1')-Cer + UDP + H(+). It functions in the pathway glycolipid biosynthesis. In terms of biological role, catalyzes the transfer of galactose from UDP-alpha-D-galactose to lactosylceramide/beta-D-galactosyl-(1-&gt;4)-beta-D-glucosyl-(1&lt;-&gt;1)-ceramide(d18:1(4E)) to produce globotriaosylceramide/globoside Gb3Cer (d18:1(4E)). Also able to transfer galactose to galactosylceramide/beta-D-Gal-(1&lt;-&gt;1')-Cer. Globoside Gb3Cer is a glycosphingolipid of the globo serie, one of the major types of neutral root structures of glycosphingolipids, that constitute a significant portion of mammalian cell membranes. The chain is Lactosylceramide 4-alpha-galactosyltransferase from Mus musculus (Mouse).